The chain runs to 311 residues: Very-long-chain 3-oxoacyl-CoA reductase-B (311 aa).

Residues 8–28 traverse the membrane as a helical segment; it reads LFWVGAVTVLWLSVSSLWSLI. 48–77 contacts NADP(+); it reads GKWAVVTGATDGIGKAYAEELARRGFAIVL. A helical membrane pass occupies residues 125–145; it reads IGVLVNNVGVSYSYPEFFLNI. S187 contacts substrate. Residue Y200 is the Proton acceptor of the active site. The chain crosses the membrane as a helical span at residues 269–289; sequence GYLPHAIMGWVTASLLPAKLL.

Belongs to the short-chain dehydrogenases/reductases (SDR) family. 17-beta-HSD 3 subfamily.

It localises to the endoplasmic reticulum membrane. It catalyses the reaction a very-long-chain (3R)-3-hydroxyacyl-CoA + NADP(+) = a very-long-chain 3-oxoacyl-CoA + NADPH + H(+). It carries out the reaction 17beta-estradiol + NAD(+) = estrone + NADH + H(+). The catalysed reaction is 17beta-estradiol + NADP(+) = estrone + NADPH + H(+). Its pathway is lipid metabolism; fatty acid biosynthesis. The protein operates within steroid biosynthesis; estrogen biosynthesis. Functionally, catalyzes the second of the four reactions of the long-chain fatty acids elongation cycle. This endoplasmic reticulum-bound enzymatic process, allows the addition of two carbons to the chain of long- and very long-chain fatty acids/VLCFAs per cycle. This enzyme has a 3-ketoacyl-CoA reductase activity, reducing 3-ketoacyl-CoA to 3-hydroxyacyl-CoA, within each cycle of fatty acid elongation. Thereby, it may participate in the production of VLCFAs of different chain lengths that are involved in multiple biological processes as precursors of membrane lipids and lipid mediators. May also catalyze the transformation of estrone (E1) into estradiol (E2) and play a role in estrogen formation. The polypeptide is Very-long-chain 3-oxoacyl-CoA reductase-B (hsd17b12b) (Danio rerio (Zebrafish)).